A 269-amino-acid polypeptide reads, in one-letter code: uncharacterized protein (269 aa).

This is an uncharacterized protein from Acanthamoeba polyphaga (Amoeba).